Reading from the N-terminus, the 400-residue chain is Subtilisin-like protease 7 (400 aa).

The signal sequence occupies residues 1-20 (MGFITKAIPLALAAASVING). Residues 21–119 (AEIMETRAGV…IERDARVQIN (99 aa)) constitute a propeptide that is removed on maturation. One can recognise an Inhibitor I9 domain in the interval 36–118 (KYIVVMNDGM…YIERDARVQI (83 aa)). An N-linked (GlcNAc...) asparagine glycan is attached at N58. Positions 129–400 (SWGLARVGSK…SKLINNGSGM (272 aa)) constitute a Peptidase S8 domain. Catalysis depends on charge relay system residues D161 and H192. 2 N-linked (GlcNAc...) asparagine glycosylation sites follow: N222 and N252. S346 (charge relay system) is an active-site residue. The N-linked (GlcNAc...) asparagine glycan is linked to N396.

Belongs to the peptidase S8 family.

It localises to the secreted. Secreted subtilisin-like serine protease with keratinolytic activity that contributes to pathogenicity. This chain is Subtilisin-like protease 7 (SUB7), found in Arthroderma benhamiae (Trichophyton mentagrophytes).